The chain runs to 666 residues: Phosphoenolpyruvate carboxykinase (ATP) (666 aa).

Disordered regions lie at residues 1-68 (MATP…AHSP) and 91-132 (ASLT…HPAA). Residues 48 to 58 (APTTPNRSAPT) show a composition bias toward polar residues. Positions 109–123 (KGEAAAQGAPSTPRA) are enriched in low complexity. ATP is bound at residue 364–371 (GLSGTGKT).

It belongs to the phosphoenolpyruvate carboxykinase (ATP) family.

The protein localises to the cytoplasm. It carries out the reaction oxaloacetate + ATP = phosphoenolpyruvate + ADP + CO2. It participates in carbohydrate biosynthesis; gluconeogenesis. The polypeptide is Phosphoenolpyruvate carboxykinase (ATP) (Zea mays (Maize)).